Consider the following 85-residue polypeptide: Delta/kappa-theraphotoxin-Pm1a (85 aa).

A signal peptide spans 1–19 (MKTFVFIVLVALAFVLTAA). A propeptide spanning residues 20–43 (KEERANPSELVSALAELVMLDAER) is cleaved from the precursor. 3 disulfide bridges follow: cysteine 50–cysteine 64, cysteine 57–cysteine 69, and cysteine 63–cysteine 77.

Belongs to the neurotoxin 10 (Hwtx-1) family. In terms of tissue distribution, expressed by the venom gland.

It localises to the secreted. Functionally, multimodal toxin that enhances nociceptor excitability mainly by the simultaneous stimulation of repetitive firing (through Nav1.8/SCN10A channel current enhancement) and impairment of repolarization (by inhibiting delayed rectifier current of Kv2.1/KCNB1), with a potential contribution from tetrodotoxin-sensitive voltage-gated sodium channels (Nav) modified excitability. Enhances Nav1.8/SCN10A currents (EC(50)=1.1 uM), modifies the channel gating by a right-shift in steady-state inactivation and delays open-state inactivation. Also decreases Kv2.1/KCNB1 currents (IC(50)=0.43 uM) and causes a depolarizing shift in the voltage dependence of activation without change in steady-state inactivation. In addition, inhibits peak currents of human sodium channels (Nav1.1 to Nav1.7, IC(50)=0.38-2.3 uM) and delays fast inactivation of Nav1.1/SCN1A, Nav1.3/SCN3A, Nav1.6/SCN8A, and Nav1.7/SCN9A. In small dorsal root ganglion neurons, induces hyperexcitability by enhancing tetrodotoxin-resistant sodium currents, impairing repolarization and lowering the threshold of action potential firing, consistent with the severe pain associated with envenomation. In vivo, elicits nocifensive behavior in mice after intraplantar injection. In Pelinobius muticus (King baboon spider), this protein is Delta/kappa-theraphotoxin-Pm1a.